We begin with the raw amino-acid sequence, 83 residues long: Cell division topological specificity factor (83 aa).

The protein belongs to the MinE family.

Prevents the cell division inhibition by proteins MinC and MinD at internal division sites while permitting inhibition at polar sites. This ensures cell division at the proper site by restricting the formation of a division septum at the midpoint of the long axis of the cell. The sequence is that of Cell division topological specificity factor from Buchnera aphidicola subsp. Schizaphis graminum (strain Sg).